The primary structure comprises 150 residues: Lipoprotein signal peptidase (150 aa).

2 consecutive transmembrane segments (helical) span residues 59–79 and 84–101; these read VFVGVTVLVAIIILAAYRYLP and LLRLSLALMLGGALGNLI. Residues Asp-111 and Asp-125 contribute to the active site. Residues 117-137 form a helical membrane-spanning segment; that stretch reads IWPVFNLADMAIVFGVIILCW.

This sequence belongs to the peptidase A8 family.

It localises to the cell membrane. It carries out the reaction Release of signal peptides from bacterial membrane prolipoproteins. Hydrolyzes -Xaa-Yaa-Zaa-|-(S,diacylglyceryl)Cys-, in which Xaa is hydrophobic (preferably Leu), and Yaa (Ala or Ser) and Zaa (Gly or Ala) have small, neutral side chains.. It functions in the pathway protein modification; lipoprotein biosynthesis (signal peptide cleavage). In terms of biological role, this protein specifically catalyzes the removal of signal peptides from prolipoproteins. The protein is Lipoprotein signal peptidase of Moorella thermoacetica (strain ATCC 39073 / JCM 9320).